The primary structure comprises 341 residues: Phosphate acyltransferase (341 aa).

It belongs to the PlsX family. Homodimer. Probably interacts with PlsY.

Its subcellular location is the cytoplasm. It carries out the reaction a fatty acyl-[ACP] + phosphate = an acyl phosphate + holo-[ACP]. The protein operates within lipid metabolism; phospholipid metabolism. Its function is as follows. Catalyzes the reversible formation of acyl-phosphate (acyl-PO(4)) from acyl-[acyl-carrier-protein] (acyl-ACP). This enzyme utilizes acyl-ACP as fatty acyl donor, but not acyl-CoA. The chain is Phosphate acyltransferase from Nostoc sp. (strain PCC 7120 / SAG 25.82 / UTEX 2576).